Consider the following 431-residue polypeptide: Serine/threonine-protein kinase Sgk1 (431 aa).

The tract at residues 58 to 93 (LNLTPPQDPELMNSNPSPPPSPSQQINLGPSSNPSA) is disordered. The segment covering 81 to 93 (QQINLGPSSNPSA) has biased composition (polar residues). The Protein kinase domain maps to 98-355 (FHFLKVIGKG…FTEIKNHVFF (258 aa)). Residues 104–112 (IGKGSFGKV) and K127 each bind ATP. D222 acts as the Proton acceptor in catalysis. The AGC-kinase C-terminal domain occupies 356-431 (SPINWDDLNA…SYAPSMDSYL (76 aa)).

It belongs to the protein kinase superfamily. AGC Ser/Thr protein kinase family.

It is found in the cytoplasm. It localises to the nucleus. The protein resides in the endoplasmic reticulum. The catalysed reaction is L-seryl-[protein] + ATP = O-phospho-L-seryl-[protein] + ADP + H(+). It carries out the reaction L-threonyl-[protein] + ATP = O-phospho-L-threonyl-[protein] + ADP + H(+). Protein kinase that may play an important role in cellular stress response. May be involved in the regulation of processes such as cell survival, neuronal excitability and renal sodium excretion. This Fundulus heteroclitus (Killifish) protein is Serine/threonine-protein kinase Sgk1 (sgk1).